Consider the following 176-residue polypeptide: MTTIVSVRRNGQVVVGGDGQVSLGNTVMKGNARKVRRLYNGKVLAGFAGGTADAFTLFELFERKLEMHQGHLLKSAVELAKDWRTDRALRKLEAMLIVADEKESLIITGIGDVVQPEADQILAIGSGGNFALSAARALVENTELSAREIVEKSLKIAGDICVYTNTHFTIEELPNS.

Threonine 2 is a catalytic residue. Na(+)-binding residues include glycine 158, cysteine 161, and threonine 164.

This sequence belongs to the peptidase T1B family. HslV subfamily. In terms of assembly, a double ring-shaped homohexamer of HslV is capped on each side by a ring-shaped HslU homohexamer. The assembly of the HslU/HslV complex is dependent on binding of ATP.

Its subcellular location is the cytoplasm. It catalyses the reaction ATP-dependent cleavage of peptide bonds with broad specificity.. With respect to regulation, allosterically activated by HslU binding. Protease subunit of a proteasome-like degradation complex believed to be a general protein degrading machinery. This Pasteurella multocida (strain Pm70) protein is ATP-dependent protease subunit HslV.